A 330-amino-acid chain; its full sequence is Aspartate--ammonia ligase (330 aa).

It belongs to the class-II aminoacyl-tRNA synthetase family. AsnA subfamily. In terms of assembly, homodimer.

The protein resides in the cytoplasm. It catalyses the reaction L-aspartate + NH4(+) + ATP = L-asparagine + AMP + diphosphate + H(+). Its pathway is amino-acid biosynthesis; L-asparagine biosynthesis; L-asparagine from L-aspartate (ammonia route): step 1/1. The polypeptide is Aspartate--ammonia ligase (Salmonella typhimurium (strain LT2 / SGSC1412 / ATCC 700720)).